We begin with the raw amino-acid sequence, 95 residues long: Integration host factor subunit beta (95 aa).

The segment at 56–76 (RAPRTGRNPKTGTSVELDGKY) is disordered.

It belongs to the bacterial histone-like protein family. In terms of assembly, heterodimer of an alpha and a beta chain.

In terms of biological role, this protein is one of the two subunits of integration host factor, a specific DNA-binding protein that functions in genetic recombination as well as in transcriptional and translational control. The polypeptide is Integration host factor subunit beta (Shewanella denitrificans (strain OS217 / ATCC BAA-1090 / DSM 15013)).